Here is a 568-residue protein sequence, read N- to C-terminus: Potassium-transporting ATPase potassium-binding subunit (568 aa).

10 consecutive transmembrane segments (helical) span residues 3-23, 64-84, 133-153, 179-199, 255-275, 281-301, 375-395, 418-438, 497-517, and 536-556; these read TEILGVVAQVALMVILAYPLG, FLKALLILNAFWFVWGMVLLV, FVIMLFQFITAATGMAAMAGI, ILLPLSLIVGFILILQGTPMG, MVECWSILIIPMAMVLALGFY, LAYSIFGVMLFAFLVGVCINV, FGGVGVGWMNYYTFIIIAVFI, IATIVALLHPFVILVFTAISS, IVLILSRFLPIIGQVAIAGLL, and TFGIMTFVVIFIVAALSFFPV.

It belongs to the KdpA family. As to quaternary structure, the system is composed of three essential subunits: KdpA, KdpB and KdpC.

It localises to the cell inner membrane. Functionally, part of the high-affinity ATP-driven potassium transport (or Kdp) system, which catalyzes the hydrolysis of ATP coupled with the electrogenic transport of potassium into the cytoplasm. This subunit binds the periplasmic potassium ions and delivers the ions to the membrane domain of KdpB through an intramembrane tunnel. The chain is Potassium-transporting ATPase potassium-binding subunit from Bacteroides thetaiotaomicron (strain ATCC 29148 / DSM 2079 / JCM 5827 / CCUG 10774 / NCTC 10582 / VPI-5482 / E50).